The sequence spans 144 residues: Transcriptional regulator MraZ (144 aa).

SpoVT-AbrB domains are found at residues 5-47 (EYDH…TLDE) and 76-119 (AVEV…DRET).

This sequence belongs to the MraZ family. As to quaternary structure, forms oligomers.

Its subcellular location is the cytoplasm. It is found in the nucleoid. The protein is Transcriptional regulator MraZ of Staphylococcus aureus.